A 378-amino-acid chain; its full sequence is uncharacterized protein (378 aa).

Cysteine 16 functions as the For GATase activity in the catalytic mechanism. A Glutamine amidotransferase type-2 domain is found at 16 to 378 (CGLFGVIDRS…ELAKQLSEVE (363 aa)).

This is an uncharacterized protein from Archaeoglobus fulgidus (strain ATCC 49558 / DSM 4304 / JCM 9628 / NBRC 100126 / VC-16).